Consider the following 907-residue polypeptide: Valine--tRNA ligase (907 aa).

The short motif at 45-55 is the 'HIGH' region element; it reads PNVTGSLHMGH. The 'KMSKS' region signature appears at 554 to 558; it reads KMSKS. Lys-557 contributes to the ATP binding site. Residues 838–870 adopt a coiled-coil conformation; that stretch reads GQLIDLEAERARLVKNVSKIEQDIEKISVKLNN.

Belongs to the class-I aminoacyl-tRNA synthetase family. ValS type 1 subfamily. As to quaternary structure, monomer.

The protein resides in the cytoplasm. The catalysed reaction is tRNA(Val) + L-valine + ATP = L-valyl-tRNA(Val) + AMP + diphosphate. Catalyzes the attachment of valine to tRNA(Val). As ValRS can inadvertently accommodate and process structurally similar amino acids such as threonine, to avoid such errors, it has a 'posttransfer' editing activity that hydrolyzes mischarged Thr-tRNA(Val) in a tRNA-dependent manner. The sequence is that of Valine--tRNA ligase from Bartonella quintana (strain Toulouse) (Rochalimaea quintana).